Here is a 447-residue protein sequence, read N- to C-terminus: Cobyrinate a,c-diamide synthase (447 aa).

Positions 247 to 435 constitute a GATase cobBQ-type domain; that stretch reads RIGVAIDEAF…IHIHAASCPQ (189 aa). Cys329 functions as the Nucleophile in the catalytic mechanism.

Belongs to the CobB/CbiA family. Requires Mg(2+) as cofactor.

The catalysed reaction is cob(II)yrinate + 2 L-glutamine + 2 ATP + 2 H2O = cob(II)yrinate a,c diamide + 2 L-glutamate + 2 ADP + 2 phosphate + 2 H(+). It catalyses the reaction Ni-sirohydrochlorin + 2 L-glutamine + 2 ATP + 2 H2O = Ni-sirohydrochlorin a,c-diamide + 2 L-glutamate + 2 ADP + 2 phosphate + 2 H(+). The protein operates within cofactor biosynthesis; adenosylcobalamin biosynthesis; cob(II)yrinate a,c-diamide from sirohydrochlorin (anaerobic route): step 10/10. Functionally, catalyzes the ATP-dependent amidation of the two carboxylate groups at positions a and c of cobyrinate, using either L-glutamine or ammonia as the nitrogen source. Involved in the biosynthesis of the unique nickel-containing tetrapyrrole coenzyme F430, the prosthetic group of methyl-coenzyme M reductase (MCR), which plays a key role in methanogenesis and anaerobic methane oxidation. Catalyzes the ATP-dependent amidation of the two carboxylate groups at positions a and c of Ni-sirohydrochlorin, using L-glutamine or ammonia as the nitrogen source. This is Cobyrinate a,c-diamide synthase from Methanothermobacter thermautotrophicus (strain ATCC 29096 / DSM 1053 / JCM 10044 / NBRC 100330 / Delta H) (Methanobacterium thermoautotrophicum).